Here is a 342-residue protein sequence, read N- to C-terminus: Aquaporin-7 (342 aa).

At 1–36 the chain is on the cytoplasmic side; sequence MVQTSRHRRSTRGSKMVSWSVMAKIQEILQKKMVRE. A Phosphoserine modification is found at Ser20. The helical transmembrane segment at 37–54 threads the bilayer; the sequence is FLAEFMSTYVMMVFGLGS. The Extracellular portion of the chain corresponds to 55 to 67; the sequence is VAHMVLNKKYGSY. Residues 68 to 85 traverse the membrane as a helical segment; it reads LGVNLGFGFGVTMGVHVA. The Cytoplasmic portion of the chain corresponds to 86–89; that stretch reads GHIS. The discontinuously helical intramembrane region spans 90–103; the sequence is GAHMNAAVTFANCA. An NPA 1 motif is present at residues 94-96; sequence NAA. At 104 to 111 the chain is on the cytoplasmic side; sequence LGRVPWRK. The chain crosses the membrane as a helical span at residues 112–132; sequence FPVYVLGQFLGSFLAAATIYT. The Extracellular portion of the chain corresponds to 133–167; the sequence is LFYTAILHFSGGQLMVTGPVATAGIFATYLPDHMT. Residues 168–188 form a helical membrane-spanning segment; sequence LWRGFLNEAWLTGMLQLCLFA. Topologically, residues 189–200 are cytoplasmic; that stretch reads ITDQENNAALPG. Residues 201–217 form a helical membrane-spanning segment; sequence TQALVIGILVVIIGVSL. The Extracellular portion of the chain corresponds to 218–221; it reads GMNT. The segment at residues 222-235 is an intramembrane region (discontinuously helical); it reads GYAINPSRDLPPRV. Positions 226-228 match the NPA 2 motif; the sequence is NPS. The Extracellular portion of the chain corresponds to 236–253; it reads FTFIAGWGKEVFSEGENW. Residues 254 to 275 form a helical membrane-spanning segment; that stretch reads WWVPVVAPLLGACLGGIIYLVF. At 276-342 the chain is on the cytoplasmic side; sequence IGSTTPREPL…LHESMALGHF (67 aa).

This sequence belongs to the MIP/aquaporin (TC 1.A.8) family. In terms of assembly, homotetramer; each monomer provides an independent glycerol/water pore. Two homotetramers on opposing membranes can dimerize, forming a cell-cell junction. Interacts with PLIN1. In terms of processing, phosphorylation by PKA could prevent the interaction with PLIN1.

Its subcellular location is the cell membrane. The protein resides in the cytoplasmic vesicle membrane. The protein localises to the lipid droplet. It catalyses the reaction glycerol(in) = glycerol(out). It carries out the reaction H2O(in) = H2O(out). The catalysed reaction is urea(in) = urea(out). With respect to regulation, glycerol transport is regulated by pH, with the porin being permeable to glycerol at pH 7.4 but not at pH 5.5. Water permeability, however, is not influenced by pH. In terms of biological role, aquaglyceroporins form homotetrameric transmembrane channels, with each monomer independently mediating glycerol and water transport across the plasma membrane along their osmotic gradient. Could also be permeable to urea. Mediates the efflux of glycerol, formed upon triglyceride hydrolysis, to avoid its accumulation in adipocytes and to make it available to other tissues. In the kidney, mediates the reabsorption of glycerol, preventing its loss in urine, again participating to energy homeostasis. In pancreatic beta cells, it also mediates the efflux of glycerol, regulating its intracellular levels. This Macaca fascicularis (Crab-eating macaque) protein is Aquaporin-7 (AQP7).